Consider the following 1163-residue polypeptide: MPRFLKYILGLFLISISAFGQNLVPEVTELESGFNSPPNQAKARTWWHWISGNVSKSGITKDLEAMKAVGIQEAQLFNVDLGFPAGPVDYLSEDWLDLFHFSALEAKRIGLELTFHNTAGWSSSGGPWISPEYAMQTVVYSEIIVKGGKAIKKQLPQPETKLNFYKDIAVLAFPKPKQTMKIDDLDFKSLSGRIRNHLLPDTKIIPSEAVIQKQEIINLTAHLNDAGILEWKVPKGEWVILRLGHTPTGKKNHPAPKGGHGLEVDKMSTKAVDVYWEGGIQPILNKLGDLVGTTVNNCLIDSYEVGTANWTAGFDAEFETLRGYSLVSYLPTLAGYYVESGEITERFLWDFRRTIGDLMAKNYYAHFRDLCHKNGLKFSVEPYWGPFDNMQVGATGDIVMCEFWSGGYPFFDSPKFVSSIAHLNGSSIVGAESFTGIGGWDEHPAELKSIGDRAWAEGITRFIFHTYVHQPWDVAPGLALSYHGTDFNRLNTWWRQGKAFMDYIARSQFMLQQGKNVADVLVFTGESSPNTAFLLPEIKQLGYDYDLIGSNKLSDLFVKNGKICTPVGGQYDVLMLPESDWIKPETLHKIEDLVKDGAKVIGSKPKKSPSLEHYSTCDAEVKRLSDFLWGKGLVKEISIVDFLKGNNLLADFKIESDDVSDISFIHRKTDEADIYFIANARKESREIKVRFRVSNKQPEIWQAESGTIKKPAVWQNHADGTTSLPLQLGMEEAVFVVFKNASKEKSQLVSAKMELENPKSEPLSNLQIIKAEYGTFLQEGLVDITDKVAAEVKDNQLHIQASRAFCDCDPAMGYIKEFRMEYQIGEDIKTISAQEKEYVNINAGDKKLTVLKAVFGKFKPETKGVPKHYPVHDVTEKIKQEIASGNLVIPVNNQLIGGKTPEGDNTTIKITFTTDGEEQTLFVPKGRPLNLSKDRSKPEIVLNDGETQWITPYPGTLSYKNLSGKVMATTVKSVPQPIMLAGTWDVEFPSDLVTINKVRFDELKSWSAVENEGIKYFSGTASYHKTFQVSKKLLKSNNKLELDLGSVAVIAEVILNGKPVGTLWKAPFRLDVTNDVKTGENKLEVKVTNLWPNRLIGDEKLPLDFERKGPKIKSVPDWLLNNTKRPSERTTFPAWKHWDKEDELLSSGLLGPVKINVLVEKSL.

The first 20 residues, 1–20 (MPRFLKYILGLFLISISAFG), serve as a signal peptide directing secretion.

Belongs to the glycosyl hydrolase 2 family.

It localises to the periplasm. It carries out the reaction a beta-D-glucuronoside + H2O = D-glucuronate + an alcohol. Glycoside hydrolase involved in ulvan degradation. Ulvan is the main polysaccharide component of the Ulvales (green seaweed) cell wall. It is composed of disaccharide building blocks comprising 3-sulfated rhamnose (Rha3S) linked to D-glucuronic acid (GlcA), L-iduronic acid (IduA), or D-xylose (Xyl). The chain is Putative beta-glucuronidase from Formosa agariphila (strain DSM 15362 / KCTC 12365 / LMG 23005 / KMM 3901 / M-2Alg 35-1).